Consider the following 156-residue polypeptide: Regulatory protein RecX (156 aa).

The protein belongs to the RecX family.

The protein resides in the cytoplasm. Functionally, modulates RecA activity. The protein is Regulatory protein RecX of Pseudomonas putida (strain ATCC 47054 / DSM 6125 / CFBP 8728 / NCIMB 11950 / KT2440).